Consider the following 722-residue polypeptide: Probable glycerol-3-phosphate dehydrogenase, mitochondrial (722 aa).

Residues 1–43 (MSWVRFTKTGVAVVATSAAAVLALDMTNERRFQRQVKDHFRTV) constitute a mitochondrion transit peptide. Residue 76 to 104 (DVLIIGGGATGAGVALDAQTRGLKTALVE) coordinates FAD. EF-hand domains lie at 624-659 (EEMQ…HNQK) and 660-695 (IDER…LKGG). Ca(2+) is bound by residues Asp673, Asn675, Asn677, Glu679, and Glu684.

Belongs to the FAD-dependent glycerol-3-phosphate dehydrogenase family. Requires FAD as cofactor.

Its subcellular location is the mitochondrion. The enzyme catalyses a quinone + sn-glycerol 3-phosphate = dihydroxyacetone phosphate + a quinol. It functions in the pathway polyol metabolism; glycerol degradation via glycerol kinase pathway; glycerone phosphate from sn-glycerol 3-phosphate (anaerobic route): step 1/1. With respect to regulation, calcium-binding enhances the activity of the enzyme. This chain is Probable glycerol-3-phosphate dehydrogenase, mitochondrial, found in Caenorhabditis elegans.